We begin with the raw amino-acid sequence, 227 residues long: Lipoprotein-releasing system ATP-binding protein LolD (227 aa).

The region spanning 7-227 (LQLTGVERHY…TISDGKIVDF (221 aa)) is the ABC transporter domain. 43 to 50 (APSGTGKS) is a binding site for ATP.

The protein belongs to the ABC transporter superfamily. Lipoprotein translocase (TC 3.A.1.125) family. As to quaternary structure, the complex is composed of two ATP-binding proteins (LolD) and two transmembrane proteins (LolC and LolE).

It is found in the cell inner membrane. Part of the ABC transporter complex LolCDE involved in the translocation of mature outer membrane-directed lipoproteins, from the inner membrane to the periplasmic chaperone, LolA. Responsible for the formation of the LolA-lipoprotein complex in an ATP-dependent manner. In Rhizobium johnstonii (strain DSM 114642 / LMG 32736 / 3841) (Rhizobium leguminosarum bv. viciae), this protein is Lipoprotein-releasing system ATP-binding protein LolD.